A 552-amino-acid chain; its full sequence is MSDIALSISILALVAVLGLWIGNWRICGVGLGIGGVLFGGIFVGHFTDSWGVALDSHTLHFIQEFGLILFVYTIGIQVGPGFFASLRSSGLKLNAFAALVVLLGCIVAIGLYKIFDVPLPVILGIFSGAVTNTPSLGAGQQILTELGAQEGMLDLTGMGYAVAYPFGICGILLTMWILRLAFRVNVDKEAEEFEVQNGHKKQNLHTLNVAIRNPNLNGLQLKDVPALAEGDIVCSRLKRGEKLHVPRPDTRIETNDLLHLVGAKHALEKARLVIGEVVDASLSTRGTDLRVQRLVVTNEIVLGKKISHLDLKEKYDVVVSRLNRAGVELVPTSQTTLQFGDILNLVGRQEAIESVSGIVGNAHQKLQQVQMLPVFVGIGLGVLLGSIPFYLPGFPAAIKLGLAGGPLLVALILARIGSIGKLYWFMPPSANLALREIGIVLFLAVVGLKSGGGFVDTLVNGDGLSWMGYGIVITLVPLLTVGFLARIVGQLNYLTICGMLAGSMTDPPALAFANGLHPTSGASALSYATVYPLVMCLRILSPQILALLLWAV.

A run of 5 helical transmembrane segments spans residues 4 to 24, 26 to 46, 65 to 85, 95 to 115, and 158 to 178; these read IALS…IGNW, ICGV…VGHF, FGLI…FFAS, AFAA…YKIF, and MGYA…MWIL. RCK C-terminal domains lie at 188 to 276 and 279 to 361; these read KEAE…VIGE and DASL…IVGN. 6 consecutive transmembrane segments (helical) span residues 371–391, 394–414, 439–459, 464–484, 493–513, and 532–552; these read MLPV…PFYL, FPAA…LILA, IVLF…DTLV, LSWM…VGFL, YLTI…LAFA, and PLVM…LWAV.

Belongs to the AAE transporter (TC 2.A.81) family. YidE subfamily.

The protein resides in the cell membrane. The chain is Putative transport protein PBPRA2144 from Photobacterium profundum (strain SS9).